The primary structure comprises 96 residues: MHVTLVEINVKEDKVDQFIEVFRANHLGSIREAGNLRFDVLRDEHIPTRFYIYEAYTDEAAVAIHKTTPHYLQCVEQLAPLMTGPRKKTVFIGLMP.

Residues 2–91 enclose the ABM domain; the sequence is HVTLVEINVK…MTGPRKKTVF (90 aa).

This sequence belongs to the LsrG family. Homodimer.

The protein localises to the cytoplasm. The catalysed reaction is (2S)-2-hydroxy-3,4-dioxopentyl phosphate = 3-hydroxy-2,4-dioxopentyl phosphate. In terms of biological role, involved in the degradation of phospho-AI-2, thereby terminating induction of the lsr operon and closing the AI-2 signaling cycle. Catalyzes the conversion of (4S)-4-hydroxy-5-phosphonooxypentane-2,3-dione (P-DPD) to 3-hydroxy-5-phosphonooxypentane-2,4-dione (P-HPD). This Yersinia pseudotuberculosis serotype O:1b (strain IP 31758) protein is (4S)-4-hydroxy-5-phosphonooxypentane-2,3-dione isomerase.